Reading from the N-terminus, the 388-residue chain is Succinate--CoA ligase [ADP-forming] subunit beta (388 aa).

The 236-residue stretch at 9–244 (KSLFAEYGLP…PSQDDAREAH (236 aa)) folds into the ATP-grasp domain. ATP-binding positions include Lys-46, 53–55 (GRG), Glu-99, Thr-102, and Glu-107. Mg(2+)-binding residues include Asn-199 and Asp-213. Substrate-binding positions include Asn-264 and 321 to 323 (GIV).

Belongs to the succinate/malate CoA ligase beta subunit family. In terms of assembly, heterotetramer of two alpha and two beta subunits. Requires Mg(2+) as cofactor.

The enzyme catalyses succinate + ATP + CoA = succinyl-CoA + ADP + phosphate. It catalyses the reaction GTP + succinate + CoA = succinyl-CoA + GDP + phosphate. Its pathway is carbohydrate metabolism; tricarboxylic acid cycle; succinate from succinyl-CoA (ligase route): step 1/1. Succinyl-CoA synthetase functions in the citric acid cycle (TCA), coupling the hydrolysis of succinyl-CoA to the synthesis of either ATP or GTP and thus represents the only step of substrate-level phosphorylation in the TCA. The beta subunit provides nucleotide specificity of the enzyme and binds the substrate succinate, while the binding sites for coenzyme A and phosphate are found in the alpha subunit. The chain is Succinate--CoA ligase [ADP-forming] subunit beta from Shewanella frigidimarina (strain NCIMB 400).